A 253-amino-acid chain; its full sequence is 5-oxoprolinase subunit A (253 aa).

It belongs to the LamB/PxpA family. In terms of assembly, forms a complex composed of PxpA, PxpB and PxpC.

The enzyme catalyses 5-oxo-L-proline + ATP + 2 H2O = L-glutamate + ADP + phosphate + H(+). Functionally, catalyzes the cleavage of 5-oxoproline to form L-glutamate coupled to the hydrolysis of ATP to ADP and inorganic phosphate. This chain is 5-oxoprolinase subunit A, found in Bacillus cereus (strain ATCC 14579 / DSM 31 / CCUG 7414 / JCM 2152 / NBRC 15305 / NCIMB 9373 / NCTC 2599 / NRRL B-3711).